A 489-amino-acid chain; its full sequence is Calcium uptake protein 1, mitochondrial (489 aa).

A mitochondrion-targeting transit peptide spans 1–34; that stretch reads MYRLRALTAATVGMVQLTRRHHTGAFRSYQRRRL. Positions 62–109 are disordered; the sequence is SSVKHEEQMREEEPLKDVAEEAESDGALESSSGEDEDEAGSEEKKKKQ. Over residues 64-80 the composition is skewed to basic and acidic residues; sequence VKHEEQMREEEPLKDVA. The span at 81–101 shows a compositional bias: acidic residues; the sequence is EEAESDGALESSSGEDEDEAG. The polybasic region stretch occupies residues 106 to 117; it reads KKKQRIGFRDRK. Residues 133–136 are k/R-ring; sequence KIFR. Residues 229–264 form the EF-hand 1 domain; that stretch reads TPQRNFEIAFKMFDLNGDGEVDLEEFEQVQSIIRSQ. 5 residues coordinate Ca(2+): Asp-242, Asn-244, Asp-246, Glu-248, and Glu-253. A k/R-ring region spans residues 270 to 274; that stretch reads RHRDR. EF-hand domains lie at 371-386 and 420-455; these read ITFE…LKNV and LSDH…RLMR. Residues Asp-433, Asp-435, Asn-437, Glu-439, and Glu-444 each contribute to the Ca(2+) site. A C-helix region region spans residues 467–477; sequence RLVRAMWKCAQ.

It belongs to the MICU1 family. MICU1 subfamily. In terms of assembly, heterodimer; disulfide-linked; heterodimerizes with micu2. Component of the uniplex complex.

Its subcellular location is the mitochondrion intermembrane space. The protein localises to the mitochondrion inner membrane. Its function is as follows. Calcium sensor of the mitochondrial calcium uniporter (mcu) channel, which senses calcium level via its EF-hand domains. micu1 and micu2 form a disulfide-linked heterodimer that stimulates and inhibits MCU activity, depending on the concentration of calcium. At low calcium levels, micu1 occludes the pore of the MCU channel, preventing mitochondrial calcium uptake. At higher calcium levels, calcium-binding to micu1 and micu2 induces a conformational change that weakens mcu-micu1 interactions and moves the micu1-micu2 heterodimer away from the pore, allowing calcium permeation through the mcu channel. Also required to protect against manganese toxicity by preventing manganese uptake by mcu. This chain is Calcium uptake protein 1, mitochondrial (micu1), found in Danio rerio (Zebrafish).